A 260-amino-acid polypeptide reads, in one-letter code: Isoprenyl transferase (260 aa).

The active site involves aspartate 38. Position 38 (aspartate 38) interacts with Mg(2+). Residues 39-42 (GNGR), tryptophan 43, arginine 51, histidine 55, and 83-85 (STE) contribute to the substrate site. Asparagine 86 functions as the Proton acceptor in the catalytic mechanism. Substrate is bound by residues tryptophan 87, arginine 89, arginine 206, and 212 to 214 (RLS). Residue glutamate 225 participates in Mg(2+) binding.

Belongs to the UPP synthase family. As to quaternary structure, homodimer. The cofactor is Mg(2+).

In terms of biological role, catalyzes the condensation of isopentenyl diphosphate (IPP) with allylic pyrophosphates generating different type of terpenoids. The polypeptide is Isoprenyl transferase (Heliobacterium mobile (Heliobacillus mobilis)).